Here is a 149-residue protein sequence, read N- to C-terminus: Calmodulin-2 (149 aa).

Position 2 is an N-acetylalanine (alanine 2). EF-hand domains are found at residues 8–43 (EQIAEFKEAFSLFDKDGDGCITTKELGTVMRSLGQN), 44–79 (PTEAELQDMISEVDADQNGTIDFPEFLNLMARKMKD), 81–116 (DSEEELKEAFKVFDKDQNGYISAADVRHVMTNLGEK), and 117–149 (LTDEEVDEMIREADMDGDGQVNYEEFVRMMLAK). The Ca(2+) site is built by aspartate 21, aspartate 23, aspartate 25, cysteine 27, glutamate 32, aspartate 57, aspartate 59, asparagine 61, threonine 63, glutamate 68, aspartate 94, aspartate 96, asparagine 98, tyrosine 100, and aspartate 105. An N6,N6,N6-trimethyllysine modification is found at lysine 116. Ca(2+) is bound by residues aspartate 130, aspartate 132, aspartate 134, glutamine 136, and glutamate 141.

The protein belongs to the calmodulin family.

Functionally, calmodulin mediates the control of a large number of enzymes, ion channels and other proteins by Ca(2+). Among the enzymes to be stimulated by the calmodulin-Ca(2+) complex are a number of protein kinases and phosphatases. The protein is Calmodulin-2 (CAM72) of Petunia hybrida (Petunia).